A 557-amino-acid polypeptide reads, in one-letter code: E3 ubiquitin-protein ligase ARIH1 (557 aa).

Residues M1–L47 show a composition bias toward acidic residues. A disordered region spans residues M1–Q95. The span at E65–G92 shows a compositional bias: gly residues. The interval T105–N153 is UBA-like. K142 is modified (N6-acetyllysine). The tract at residues Q182–N393 is TRIAD supradomain. Zn(2+) is bound by residues C186, C189, C203, H205, C208, C211, C231, C236, C276, C281, C297, C299, C304, C307, H312, C317, C344, and C347. The RING-type 1 zinc-finger motif lies at C186–C236. The IBR-type zinc-finger motif lies at L256–C317. The RING-type 2; atypical zinc finger occupies C344–C375. C357 is a catalytic residue. Zn(2+)-binding residues include C362, C367, C372, C375, H382, and C389. The tract at residues R408–D557 is ariadne domain.

Belongs to the RBR family. Ariadne subfamily. As to quaternary structure, interacts (via the first RING-type zinc finger) with UBE2L3. Associates with cullin-RING ubiquitin ligase (CRL) complexes containing CUL1, CUL2 and CUL3. Interacts with neddylated CUL1. Interacts with neddylated CUL2. Interacts with neddylated CUL3. Interacts with neddylated CUL4A. As to expression, widely expressed.

The protein resides in the cytoplasm. The protein localises to the nucleus. It is found in the cajal body. The enzyme catalyses [E2 ubiquitin-conjugating enzyme]-S-ubiquitinyl-L-cysteine + [acceptor protein]-L-lysine = [E2 ubiquitin-conjugating enzyme]-L-cysteine + [acceptor protein]-N(6)-ubiquitinyl-L-lysine.. The protein operates within protein modification; protein ubiquitination. Its activity is regulated as follows. Autoinhibited by the ariadne domain, which masks the second RING-type zinc finger that contains the active site and inhibits the E3 activity. Inhibition is relieved upon binding to neddylated cullin-RING ubiquitin ligase complexes, which activate the E3 ligase activity of ARIH1. Its function is as follows. E3 ubiquitin-protein ligase, which catalyzes ubiquitination of target proteins together with ubiquitin-conjugating enzyme E2 UBE2L3. Acts as an atypical E3 ubiquitin-protein ligase by working together with cullin-RING ubiquitin ligase (CRL) complexes and initiating ubiquitination of CRL substrates: associates with CRL complexes and specifically mediates addition of the first ubiquitin on CRLs targets. The initial ubiquitin is then elongated by CDC34/UBE2R1 and UBE2R2. E3 ubiquitin-protein ligase activity is activated upon binding to neddylated cullin-RING ubiquitin ligase complexes. Plays a role in protein translation in response to DNA damage by mediating ubiquitination of EIF4E2, the consequences of EIF4E2 ubiquitination are however unclear. According to a report, EIF4E2 ubiquitination leads to promote EIF4E2 cap-binding and protein translation arrest. According to another report EIF4E2 ubiquitination leads to its subsequent degradation. Acts as the ligase involved in ISGylation of EIF4E2. In vitro, controls the degradation of the LINC (LInker of Nucleoskeleton and Cytoskeleton) complex member SUN2 and may therefore have a role in the formation and localization of the LINC complex, and as a consequence, nuclear subcellular localization and nuclear morphology. The polypeptide is E3 ubiquitin-protein ligase ARIH1 (Homo sapiens (Human)).